A 387-amino-acid polypeptide reads, in one-letter code: Small ribosomal subunit biogenesis GTPase RsgA (387 aa).

In terms of domain architecture, CP-type G spans 112 to 273 (YDGLKPVAAN…LIDSPGVREF (162 aa)). Residues 159–162 (NKID) and 213–221 (GQSGVGKSS) each bind GTP. Zn(2+) contacts are provided by Cys-297, Cys-302, His-304, and Cys-310.

It belongs to the TRAFAC class YlqF/YawG GTPase family. RsgA subfamily. As to quaternary structure, monomer. Associates with 30S ribosomal subunit, binds 16S rRNA. Zn(2+) is required as a cofactor.

It localises to the cytoplasm. In terms of biological role, one of several proteins that assist in the late maturation steps of the functional core of the 30S ribosomal subunit. Helps release RbfA from mature subunits. May play a role in the assembly of ribosomal proteins into the subunit. Circularly permuted GTPase that catalyzes slow GTP hydrolysis, GTPase activity is stimulated by the 30S ribosomal subunit. The chain is Small ribosomal subunit biogenesis GTPase RsgA from Vibrio cholerae serotype O1 (strain ATCC 39315 / El Tor Inaba N16961).